Here is a 307-residue protein sequence, read N- to C-terminus: tRNA(Met) cytidine acetate ligase (307 aa).

ATP-binding positions include 12-25, Gly-106, Asn-163, and Arg-188; that span reads VVEY…HIYQ.

This sequence belongs to the TmcAL family.

It is found in the cytoplasm. It catalyses the reaction cytidine(34) in elongator tRNA(Met) + acetate + ATP = N(4)-acetylcytidine(34) in elongator tRNA(Met) + AMP + diphosphate. In terms of biological role, catalyzes the formation of N(4)-acetylcytidine (ac(4)C) at the wobble position of elongator tRNA(Met), using acetate and ATP as substrates. First activates an acetate ion to form acetyladenylate (Ac-AMP) and then transfers the acetyl group to tRNA to form ac(4)C34. The sequence is that of tRNA(Met) cytidine acetate ligase from Mycoplasmopsis synoviae (strain 53) (Mycoplasma synoviae).